The primary structure comprises 863 residues: DNA replication licensing factor mcm4 (863 aa).

Residues 1-121 are disordered; it reads MSSPTSTPSR…ARQRPDLGSA (121 aa). 2 stretches are compositionally biased toward polar residues: residues 54-64 and 78-99; these read SPSGDLQSPSG and SALQSELDLSSPLTYGTPSSRV. The C4-type zinc finger occupies 306 to 331; that stretch reads CQVCAFTTRVEIDRGRISEPSVCKHC. The MCM domain maps to 458–667; the sequence is IYERLASALA…YDRRLAHHLV (210 aa). Residues tyrosine 471, arginine 497, lysine 516, serine 517, asparagine 618, arginine 643, arginine 732, and glutamate 735 each contribute to the ATP site. The short motif at 642–645 is the Arginine finger element; sequence SRFD.

It belongs to the MCM family. In terms of assembly, component of the mcm2-7 complex (RLF-M). The complex forms a toroidal hexameric ring with the proposed subunit order mcm2-mcm6-mcm4-mcm7-mcm3-mcm5. The heterodimer of mmcm3/mcm5 interacts with mcm4, mmcm6, mcm7 and weakly with mcm2. Component of the CMG helicase complex, composed of the mcm2-7 complex, the GINS complex and cdc45. Hyperphosphorylated during mitosis in a mechanism requiring cdc2-cyclin B and other kinases. Undergoes dephosphorylation after exiting mitosis, existing in a partially phosphorylated state in the cytosolic interphase mcm complex which associates with the pre-replication complexes (pre-Rcs). Complete dephosphorylation inactivates the mcm complex, preventing its binding to chromatin. Becomes actively phosphorylated during S phase once the mcm complex is assembled on the chromatin. This chromatin-associated phosphorylation occurs during the activation of the pre-Rcs and is independent of cdks. Phosphorylated by the cdc7-dbf4b complex.

The protein resides in the nucleus. Its subcellular location is the chromosome. The enzyme catalyses ATP + H2O = ADP + phosphate + H(+). Functionally, acts as a component of the MCM2-7 complex (MCM complex) which is the replicative helicase essential for 'once per cell cycle' DNA replication initiation and elongation in eukaryotic cells. Core component of CDC45-MCM-GINS (CMG) helicase, the molecular machine that unwinds template DNA during replication, and around which the replisome is built. The active ATPase sites in the MCM2-7 ring are formed through the interaction surfaces of two neighboring subunits such that a critical structure of a conserved arginine finger motif is provided in trans relative to the ATP-binding site of the Walker A box of the adjacent subunit. The six ATPase active sites, however, are likely to contribute differentially to the complex helicase activity. This is DNA replication licensing factor mcm4 from Xenopus tropicalis (Western clawed frog).